The primary structure comprises 658 residues: uncharacterized protein (658 aa).

The segment covering 516–639 has biased composition (low complexity); sequence SSNNSNSSNN…NNNNNSSQGG (124 aa). Positions 516–646 are disordered; sequence SSNNSNSSNN…QGGNSQGGSG (131 aa).

It localises to the cytoplasm. This is an uncharacterized protein from Schizosaccharomyces pombe (strain 972 / ATCC 24843) (Fission yeast).